The primary structure comprises 442 residues: Tubulin beta chain (442 aa).

Positions 11, 67, 136, 140, 141, 142, and 202 each coordinate GTP. E67 provides a ligand contact to Mg(2+).

It belongs to the tubulin family. In terms of assembly, dimer of alpha and beta chains. A typical microtubule is a hollow water-filled tube with an outer diameter of 25 nm and an inner diameter of 15 nM. Alpha-beta heterodimers associate head-to-tail to form protofilaments running lengthwise along the microtubule wall with the beta-tubulin subunit facing the microtubule plus end conferring a structural polarity. Microtubules usually have 13 protofilaments but different protofilament numbers can be found in some organisms and specialized cells. Requires Mg(2+) as cofactor.

The protein localises to the cytoplasm. Its subcellular location is the cytoskeleton. Functionally, tubulin is the major constituent of microtubules, a cylinder consisting of laterally associated linear protofilaments composed of alpha- and beta-tubulin heterodimers. Microtubules grow by the addition of GTP-tubulin dimers to the microtubule end, where a stabilizing cap forms. Below the cap, tubulin dimers are in GDP-bound state, owing to GTPase activity of alpha-tubulin. The protein is Tubulin beta chain (TUBB) of Euglena gracilis.